Reading from the N-terminus, the 265-residue chain is Cytochrome c oxidase subunit 3 (265 aa).

6 consecutive transmembrane segments (helical) span residues 16–36, 41–61, 84–104, 162–182, 200–220, and 245–265; these read PWPISGSLGALATTVGGVMYM, GGATLLSLGLIFLLYTMFVWW, YGSILFIVSEVMFLFAFFWAS, AVYALVATVSLALVSTGFQGM, FFLATGFHGFHVIIGTLFLIV, and WHFVDVVRLFPFVSIYWWGGI.

The protein belongs to the cytochrome c oxidase subunit 3 family. As to quaternary structure, component of the cytochrome c oxidase (complex IV, CIV), a multisubunit enzyme composed of a catalytic core of 3 subunits and several supernumerary subunits. The complex exists as a monomer or a dimer and forms supercomplexes (SCs) in the inner mitochondrial membrane with ubiquinol-cytochrome c oxidoreductase (cytochrome b-c1 complex, complex III, CIII).

It localises to the mitochondrion inner membrane. The catalysed reaction is 4 Fe(II)-[cytochrome c] + O2 + 8 H(+)(in) = 4 Fe(III)-[cytochrome c] + 2 H2O + 4 H(+)(out). In terms of biological role, component of the cytochrome c oxidase, the last enzyme in the mitochondrial electron transport chain which drives oxidative phosphorylation. The respiratory chain contains 3 multisubunit complexes succinate dehydrogenase (complex II, CII), ubiquinol-cytochrome c oxidoreductase (cytochrome b-c1 complex, complex III, CIII) and cytochrome c oxidase (complex IV, CIV), that cooperate to transfer electrons derived from NADH and succinate to molecular oxygen, creating an electrochemical gradient over the inner membrane that drives transmembrane transport and the ATP synthase. Cytochrome c oxidase is the component of the respiratory chain that catalyzes the reduction of oxygen to water. Electrons originating from reduced cytochrome c in the intermembrane space (IMS) are transferred via the dinuclear copper A center (CU(A)) of subunit 2 and heme A of subunit 1 to the active site in subunit 1, a binuclear center (BNC) formed by heme A3 and copper B (CU(B)). The BNC reduces molecular oxygen to 2 water molecules using 4 electrons from cytochrome c in the IMS and 4 protons from the mitochondrial matrix. The polypeptide is Cytochrome c oxidase subunit 3 (COX3) (Aegilops columnaris (Goatgrass)).